A 132-amino-acid polypeptide reads, in one-letter code: Z-ring associated protein G (132 aa).

The helical transmembrane segment at 1 to 21 threads the bilayer; that stretch reads MTWEYALIGLVVGIIIGAVAM. A disordered region spans residues 95 to 132; the sequence is FRNRLAESEASNDQAPVQMPRDYSEGASGLLRTGAKRD.

This sequence belongs to the ZapG family.

It localises to the cell inner membrane. In terms of biological role, involved in cell division, cell envelope biogenesis and cell shape maintenance. This chain is Z-ring associated protein G, found in Escherichia coli O157:H7.